The chain runs to 578 residues: DNA primase (578 aa).

The segment at 40–64 adopts a CHC2-type zinc-finger fold; that stretch reads CPFHQEKTPSFTVNFEKQFYFCFGC. The region spanning 257–339 is the Toprim domain; sequence KQILIVEGYV…GKNVKFIFLP (83 aa). Mg(2+)-binding residues include glutamate 263, aspartate 307, and aspartate 309.

Belongs to the DnaG primase family. In terms of assembly, monomer. Interacts with DnaB. The cofactor is Zn(2+). Mg(2+) serves as cofactor.

The catalysed reaction is ssDNA + n NTP = ssDNA/pppN(pN)n-1 hybrid + (n-1) diphosphate.. Its function is as follows. RNA polymerase that catalyzes the synthesis of short RNA molecules used as primers for DNA polymerase during DNA replication. The protein is DNA primase of Buchnera aphidicola subsp. Baizongia pistaciae (strain Bp).